Consider the following 337-residue polypeptide: Anthranilate phosphoribosyltransferase (337 aa).

5-phospho-alpha-D-ribose 1-diphosphate is bound by residues glycine 81, glycine 84–aspartate 85, serine 89, asparagine 91–threonine 94, lysine 109–serine 117, and alanine 121. Glycine 81 lines the anthranilate pocket. Mg(2+) is bound at residue serine 93. Asparagine 112 is a binding site for anthranilate. Residue arginine 167 coordinates anthranilate. Mg(2+)-binding residues include aspartate 226 and glutamate 227.

It belongs to the anthranilate phosphoribosyltransferase family. In terms of assembly, homodimer. Requires Mg(2+) as cofactor.

It catalyses the reaction N-(5-phospho-beta-D-ribosyl)anthranilate + diphosphate = 5-phospho-alpha-D-ribose 1-diphosphate + anthranilate. The protein operates within amino-acid biosynthesis; L-tryptophan biosynthesis; L-tryptophan from chorismate: step 2/5. In terms of biological role, catalyzes the transfer of the phosphoribosyl group of 5-phosphorylribose-1-pyrophosphate (PRPP) to anthranilate to yield N-(5'-phosphoribosyl)-anthranilate (PRA). The protein is Anthranilate phosphoribosyltransferase of Methylobacterium sp. (strain 4-46).